The chain runs to 802 residues: Oligophrenin-1 (802 aa).

The PH domain maps to 265–368 (QPTIEGYLYT…WMEAMDGKEP (104 aa)). The 185-residue stretch at 380 to 564 (MELNEVGFKF…ILIEHFGKIY (185 aa)) folds into the Rho-GAP domain. Disordered stretches follow at residues 569–588 (EESA…RHKP), 607–666 (LDES…EPCP), 680–770 (GGTK…NAGE), and 783–802 (FETA…GDES). The span at 616 to 627 (HQTPNGTITSSI) shows a compositional bias: polar residues. The span at 716–732 (HHKEGDADSFSKVRPPG) shows a compositional bias: basic and acidic residues.

In terms of assembly, interacts with HOMER1. Interacts with AMPA receptor complexes. Interacts with SH3GL2 (endophilin-A1). Interacts (via C-terminus) with NR1D1. As to expression, expressed in brain.

It localises to the postsynapse. The protein resides in the presynapse. The protein localises to the cell projection. It is found in the axon. Its subcellular location is the dendritic spine. It localises to the dendrite. The protein resides in the cytoplasm. Its function is as follows. Stimulates GTP hydrolysis of members of the Rho family. Its action on RHOA activity and signaling is implicated in growth and stabilization of dendritic spines, and therefore in synaptic function. Critical for the stabilization of AMPA receptors at postsynaptic sites. Critical for the regulation of synaptic vesicle endocytosis at presynaptic terminals. Required for the localization of NR1D1 to dendrites, can suppress its repressor activity and protect it from proteasomal degradation. This chain is Oligophrenin-1 (OPHN1), found in Homo sapiens (Human).